The sequence spans 413 residues: Serine hydroxymethyltransferase (413 aa).

(6S)-5,6,7,8-tetrahydrofolate contacts are provided by residues Leu-116 and Gly-120–Leu-122. Lys-225 bears the N6-(pyridoxal phosphate)lysine mark. Residue Ser-349 to Phe-351 coordinates (6S)-5,6,7,8-tetrahydrofolate.

Belongs to the SHMT family. As to quaternary structure, homodimer. Pyridoxal 5'-phosphate serves as cofactor.

The protein localises to the cytoplasm. The catalysed reaction is (6R)-5,10-methylene-5,6,7,8-tetrahydrofolate + glycine + H2O = (6S)-5,6,7,8-tetrahydrofolate + L-serine. It functions in the pathway one-carbon metabolism; tetrahydrofolate interconversion. Its pathway is amino-acid biosynthesis; glycine biosynthesis; glycine from L-serine: step 1/1. Its function is as follows. Catalyzes the reversible interconversion of serine and glycine with tetrahydrofolate (THF) serving as the one-carbon carrier. This reaction serves as the major source of one-carbon groups required for the biosynthesis of purines, thymidylate, methionine, and other important biomolecules. Also exhibits THF-independent aldolase activity toward beta-hydroxyamino acids, producing glycine and aldehydes, via a retro-aldol mechanism. This chain is Serine hydroxymethyltransferase, found in Levilactobacillus brevis (strain ATCC 367 / BCRC 12310 / CIP 105137 / JCM 1170 / LMG 11437 / NCIMB 947 / NCTC 947) (Lactobacillus brevis).